Here is a 291-residue protein sequence, read N- to C-terminus: 4-hydroxy-tetrahydrodipicolinate synthase (291 aa).

T45 provides a ligand contact to pyruvate. The active-site Proton donor/acceptor is the Y131. K159 (schiff-base intermediate with substrate) is an active-site residue. Position 202 (I202) interacts with pyruvate.

Belongs to the DapA family. Homotetramer; dimer of dimers.

Its subcellular location is the cytoplasm. It catalyses the reaction L-aspartate 4-semialdehyde + pyruvate = (2S,4S)-4-hydroxy-2,3,4,5-tetrahydrodipicolinate + H2O + H(+). The protein operates within amino-acid biosynthesis; L-lysine biosynthesis via DAP pathway; (S)-tetrahydrodipicolinate from L-aspartate: step 3/4. Functionally, catalyzes the condensation of (S)-aspartate-beta-semialdehyde [(S)-ASA] and pyruvate to 4-hydroxy-tetrahydrodipicolinate (HTPA). The sequence is that of 4-hydroxy-tetrahydrodipicolinate synthase from Methanococcoides burtonii (strain DSM 6242 / NBRC 107633 / OCM 468 / ACE-M).